The sequence spans 553 residues: Formate--tetrahydrofolate ligase (553 aa).

65 to 72 (TPAGEGKS) provides a ligand contact to ATP.

The protein belongs to the formate--tetrahydrofolate ligase family.

It carries out the reaction (6S)-5,6,7,8-tetrahydrofolate + formate + ATP = (6R)-10-formyltetrahydrofolate + ADP + phosphate. The protein operates within one-carbon metabolism; tetrahydrofolate interconversion. This is Formate--tetrahydrofolate ligase from Brachyspira hyodysenteriae (strain ATCC 49526 / WA1).